We begin with the raw amino-acid sequence, 137 residues long: Large-conductance mechanosensitive channel (137 aa).

Transmembrane regions (helical) follow at residues 16-36 (VIDLAVGVIIGGAFGKIVDSI) and 83-103 (GNFITVALNFAILAFIIFLMI).

This sequence belongs to the MscL family. In terms of assembly, homopentamer.

It is found in the cell inner membrane. Functionally, channel that opens in response to stretch forces in the membrane lipid bilayer. May participate in the regulation of osmotic pressure changes within the cell. In Methylibium petroleiphilum (strain ATCC BAA-1232 / LMG 22953 / PM1), this protein is Large-conductance mechanosensitive channel.